Consider the following 117-residue polypeptide: Large ribosomal subunit protein uL18 (117 aa).

It belongs to the universal ribosomal protein uL18 family. In terms of assembly, part of the 50S ribosomal subunit; part of the 5S rRNA/L5/L18/L25 subcomplex. Contacts the 5S and 23S rRNAs.

Functionally, this is one of the proteins that bind and probably mediate the attachment of the 5S RNA into the large ribosomal subunit, where it forms part of the central protuberance. The sequence is that of Large ribosomal subunit protein uL18 from Haemophilus ducreyi (strain 35000HP / ATCC 700724).